The primary structure comprises 171 residues: Allophycocyanin subunit beta-18 (171 aa).

N4-methylasparagine is present on asparagine 72. Residue cysteine 82 coordinates (2R,3E)-phycocyanobilin.

This sequence belongs to the phycobiliprotein family. Heterodimer of an alpha and a beta chain. Post-translationally, contains one covalently linked bilin chromophore.

Its subcellular location is the plastid. It localises to the chloroplast thylakoid membrane. Functionally, light-harvesting photosynthetic bile pigment-protein from the phycobiliprotein complex. Allophycocyanin has a maximum absorption at approximately 650 nanometers. This is Allophycocyanin subunit beta-18 (apcF) from Aglaothamnion neglectum (Red alga).